Here is a 373-residue protein sequence, read N- to C-terminus: tRNA-specific 2-thiouridylase MnmA (373 aa).

Residues 12–19 (GMSGGVDS) and methionine 38 contribute to the ATP site. The interval 98–100 (NPD) is interaction with target base in tRNA. The Nucleophile role is filled by cysteine 103. A disulfide bridge links cysteine 103 with cysteine 200. Glycine 127 contributes to the ATP binding site. The interval 150–152 (KDQ) is interaction with tRNA. Cysteine 200 functions as the Cysteine persulfide intermediate in the catalytic mechanism. The interaction with tRNA stretch occupies residues 312 to 313 (RY).

This sequence belongs to the MnmA/TRMU family.

The protein resides in the cytoplasm. It catalyses the reaction S-sulfanyl-L-cysteinyl-[protein] + uridine(34) in tRNA + AH2 + ATP = 2-thiouridine(34) in tRNA + L-cysteinyl-[protein] + A + AMP + diphosphate + H(+). Functionally, catalyzes the 2-thiolation of uridine at the wobble position (U34) of tRNA, leading to the formation of s(2)U34. The chain is tRNA-specific 2-thiouridylase MnmA from Streptococcus pneumoniae (strain CGSP14).